Reading from the N-terminus, the 310-residue chain is Protein LRATD2 (310 aa).

A disordered region spans residues 1-76 (MGNQVEKLTH…PPPQPQPYDP (76 aa)). The span at 54–64 (PDGGGLPDGGD) shows a compositional bias: gly residues. Residues 65–74 (GPPPPQPQPY) show a composition bias toward pro residues. The LRAT domain maps to 122-217 (VEFVSQAQYP…CRYGKREFKI (96 aa)). The segment at 274-310 (HPAEPEEGDSNVARTTPPPGRPPAPSSEEEDGEAVAH) is disordered. Residues 289–298 (TPPPGRPPAP) show a composition bias toward pro residues. Positions 300–310 (SEEEDGEAVAH) are enriched in acidic residues.

This sequence belongs to the LRATD family. As to expression, expressed in esophageal squamous cell carcinomas.

In Homo sapiens (Human), this protein is Protein LRATD2.